We begin with the raw amino-acid sequence, 354 residues long: Alkanal monooxygenase alpha chain (354 aa).

This sequence belongs to the bacterial luciferase oxidoreductase family. Heterodimer of an alpha and a beta chain.

The enzyme catalyses a long-chain fatty aldehyde + FMNH2 + O2 = a long-chain fatty acid + hnu + FMN + H2O + 2 H(+). In terms of biological role, light-emitting reaction in luminous bacteria. The polypeptide is Alkanal monooxygenase alpha chain (luxA) (Photobacterium leiognathi).